The following is a 309-amino-acid chain: UPF0282 protein Msed_0584 (309 aa).

This sequence belongs to the UPF0282 family.

The protein is UPF0282 protein Msed_0584 of Metallosphaera sedula (strain ATCC 51363 / DSM 5348 / JCM 9185 / NBRC 15509 / TH2).